The following is a 176-amino-acid chain: Mediator of RNA polymerase II transcription subunit 11 (176 aa).

Positions 98–176 (SRVRELEETK…MGGDSSMSTN (79 aa)) are disordered. Over residues 99–108 (RVRELEETKA) the composition is skewed to basic and acidic residues. The segment covering 124 to 154 (HAAAQQQQQQQQQQQQQQQQMQQAAQQQQQQ) has biased composition (low complexity).

The protein belongs to the Mediator complex subunit 11 family. Component of the Mediator complex, which may include CDK8, MED4, MED6, MED11, MED14, MED17, MED18, MED20, MED21, MED22, MED27, MED28, MED30 and MED31.

It localises to the nucleus. Functionally, component of the Mediator complex, a coactivator involved in the regulated transcription of nearly all RNA polymerase II-dependent genes. Mediator functions as a bridge to convey information from gene-specific regulatory proteins to the basal RNA polymerase II transcription machinery. Mediator is recruited to promoters by direct interactions with regulatory proteins and serves as a scaffold for the assembly of a functional pre-initiation complex with RNA polymerase II and the general transcription factors. The sequence is that of Mediator of RNA polymerase II transcription subunit 11 (MED11) from Drosophila melanogaster (Fruit fly).